A 188-amino-acid chain; its full sequence is Acireductone dioxygenase (188 aa).

4 residues coordinate Fe(2+): histidine 97, histidine 99, glutamate 103, and histidine 141. Histidine 97, histidine 99, glutamate 103, and histidine 141 together coordinate Ni(2+).

It belongs to the acireductone dioxygenase (ARD) family. As to quaternary structure, monomer. It depends on Fe(2+) as a cofactor. Ni(2+) serves as cofactor.

It carries out the reaction 1,2-dihydroxy-5-(methylsulfanyl)pent-1-en-3-one + O2 = 3-(methylsulfanyl)propanoate + CO + formate + 2 H(+). It catalyses the reaction 1,2-dihydroxy-5-(methylsulfanyl)pent-1-en-3-one + O2 = 4-methylsulfanyl-2-oxobutanoate + formate + 2 H(+). Its pathway is amino-acid biosynthesis; L-methionine biosynthesis via salvage pathway; L-methionine from S-methyl-5-thio-alpha-D-ribose 1-phosphate: step 5/6. Its function is as follows. Catalyzes 2 different reactions between oxygen and the acireductone 1,2-dihydroxy-3-keto-5-methylthiopentene (DHK-MTPene) depending upon the metal bound in the active site. Fe-containing acireductone dioxygenase (Fe-ARD) produces formate and 2-keto-4-methylthiobutyrate (KMTB), the alpha-ketoacid precursor of methionine in the methionine recycle pathway. Ni-containing acireductone dioxygenase (Ni-ARD) produces methylthiopropionate, carbon monoxide and formate, and does not lie on the methionine recycle pathway. This is Acireductone dioxygenase from Xylella fastidiosa (strain M12).